Reading from the N-terminus, the 284-residue chain is Acetylglutamate kinase (284 aa).

Substrate contacts are provided by residues 54 to 55 (GG), Arg76, and Asn179.

Belongs to the acetylglutamate kinase family. ArgB subfamily.

Its subcellular location is the cytoplasm. It catalyses the reaction N-acetyl-L-glutamate + ATP = N-acetyl-L-glutamyl 5-phosphate + ADP. It participates in amino-acid biosynthesis; L-arginine biosynthesis; N(2)-acetyl-L-ornithine from L-glutamate: step 2/4. Its function is as follows. Catalyzes the ATP-dependent phosphorylation of N-acetyl-L-glutamate. In Sorangium cellulosum (strain So ce56) (Polyangium cellulosum (strain So ce56)), this protein is Acetylglutamate kinase.